Consider the following 425-residue polypeptide: Protein CLP1 homolog (425 aa).

Residues Glu-18, Lys-59, and 121–126 contribute to the ATP site; that span reads DVGKST.

This sequence belongs to the Clp1 family. Clp1 subfamily.

The protein resides in the nucleus. Required for endonucleolytic cleavage during polyadenylation-dependent pre-mRNA 3'-end formation. The protein is Protein CLP1 homolog (cbc) of Drosophila pseudoobscura pseudoobscura (Fruit fly).